We begin with the raw amino-acid sequence, 150 residues long: Transcriptional repressor NrdR (150 aa).

A zinc finger lies at 3-34 (CPFCGQLDSKVVDSRPDKGGAAIRRRRECESC). The ATP-cone domain occupies 49-139 (PLVLKKDGRR…VYRSFKDVNE (91 aa)).

This sequence belongs to the NrdR family. Requires Zn(2+) as cofactor.

Negatively regulates transcription of bacterial ribonucleotide reductase nrd genes and operons by binding to NrdR-boxes. The polypeptide is Transcriptional repressor NrdR (Geobacter sulfurreducens (strain ATCC 51573 / DSM 12127 / PCA)).